Reading from the N-terminus, the 304-residue chain is GTPase Era (304 aa).

The 168-residue stretch at 9-176 (KSGFVSIIGR…LLEITKHLSE (168 aa)) folds into the Era-type G domain. Positions 17–24 (GRPNVGKS) are G1. 17-24 (GRPNVGKS) contributes to the GTP binding site. Residues 43–47 (QTTRN) are G2. The G3 stretch occupies residues 64 to 67 (DTPG). GTP-binding positions include 64-68 (DTPGI) and 126-129 (NKID). The interval 126-129 (NKID) is G4. The tract at residues 155–157 (VSA) is G5. Residues 199-285 (IREKVLHLTR…FLELWVKVQK (87 aa)) enclose the KH type-2 domain.

The protein belongs to the TRAFAC class TrmE-Era-EngA-EngB-Septin-like GTPase superfamily. Era GTPase family. As to quaternary structure, monomer.

The protein resides in the cytoplasm. Its subcellular location is the cell membrane. Functionally, an essential GTPase that binds both GDP and GTP, with rapid nucleotide exchange. Plays a role in 16S rRNA processing and 30S ribosomal subunit biogenesis and possibly also in cell cycle regulation and energy metabolism. The sequence is that of GTPase Era from Halalkalibacterium halodurans (strain ATCC BAA-125 / DSM 18197 / FERM 7344 / JCM 9153 / C-125) (Bacillus halodurans).